We begin with the raw amino-acid sequence, 115 residues long: MKNRDVIVKAGSRVLKSTPRKLNLVAGLVRNKKVSFATVQLRFCEKKAAGLIRKVLNSAIANAQNYGLDIDNLYIKEILIGKSLTLRRVCPKAMGRANRVSKRYSNITVKLGEII.

It belongs to the universal ribosomal protein uL22 family. Part of the 50S ribosomal subunit.

This protein binds specifically to 23S rRNA; its binding is stimulated by other ribosomal proteins, e.g. L4, L17, and L20. It is important during the early stages of 50S assembly. It makes multiple contacts with different domains of the 23S rRNA in the assembled 50S subunit and ribosome. In terms of biological role, the globular domain of the protein is located near the polypeptide exit tunnel on the outside of the subunit, while an extended beta-hairpin is found that lines the wall of the exit tunnel in the center of the 70S ribosome. This is Large ribosomal subunit protein uL22 (rplV) from Wolbachia pipientis wMel.